We begin with the raw amino-acid sequence, 256 residues long: NH(3)-dependent NAD(+) synthetase (256 aa).

Gly29–Ser36 provides a ligand contact to ATP. Position 35 (Asp35) interacts with Mg(2+). Residue Arg115 coordinates deamido-NAD(+). Position 135 (Thr135) interacts with ATP. Glu140 provides a ligand contact to Mg(2+). 2 residues coordinate deamido-NAD(+): Lys148 and Asp155. Positions 164 and 186 each coordinate ATP. His245–Lys246 lines the deamido-NAD(+) pocket.

Belongs to the NAD synthetase family. In terms of assembly, homodimer.

It catalyses the reaction deamido-NAD(+) + NH4(+) + ATP = AMP + diphosphate + NAD(+) + H(+). The protein operates within cofactor biosynthesis; NAD(+) biosynthesis; NAD(+) from deamido-NAD(+) (ammonia route): step 1/1. Functionally, catalyzes the ATP-dependent amidation of deamido-NAD to form NAD. Uses ammonia as a nitrogen source. The chain is NH(3)-dependent NAD(+) synthetase from Methanosarcina acetivorans (strain ATCC 35395 / DSM 2834 / JCM 12185 / C2A).